The chain runs to 239 residues: Putative zinc finger protein 132L (239 aa).

The disordered stretch occupies residues 20–40; that stretch reads DASLSTKSPKREPSQEKEIKK. Residues 28–40 show a composition bias toward basic and acidic residues; sequence PKREPSQEKEIKK. C3H1-type zinc fingers lie at residues 44–68 and 81–106; these read IKKN…HPGE and RRKT…HDES. Residues 128 to 151 are disordered; the sequence is PGECKFSHPPPPPPSPPSPPPKEE. Pro residues predominate over residues 135-147; sequence HPPPPPPSPPSPP.

This Acheta domesticus (House cricket) protein is Putative zinc finger protein 132L.